The chain runs to 307 residues: Aspartate carbamoyltransferase catalytic subunit (307 aa).

Residues R59 and T60 each contribute to the carbamoyl phosphate site. L-aspartate is bound at residue K87. Residues R109, H137, and Q140 each coordinate carbamoyl phosphate. Residues R173 and R223 each coordinate L-aspartate. Carbamoyl phosphate is bound by residues G266 and P267.

It belongs to the aspartate/ornithine carbamoyltransferase superfamily. ATCase family. Heterododecamer (2C3:3R2) of six catalytic PyrB chains organized as two trimers (C3), and six regulatory PyrI chains organized as three dimers (R2).

The enzyme catalyses carbamoyl phosphate + L-aspartate = N-carbamoyl-L-aspartate + phosphate + H(+). The protein operates within pyrimidine metabolism; UMP biosynthesis via de novo pathway; (S)-dihydroorotate from bicarbonate: step 2/3. Functionally, catalyzes the condensation of carbamoyl phosphate and aspartate to form carbamoyl aspartate and inorganic phosphate, the committed step in the de novo pyrimidine nucleotide biosynthesis pathway. The protein is Aspartate carbamoyltransferase catalytic subunit of Helicobacter pylori (strain HPAG1).